The following is a 313-amino-acid chain: Ribosomal protein L11 methyltransferase (313 aa).

Positions 151, 172, 194, and 245 each coordinate S-adenosyl-L-methionine.

This sequence belongs to the methyltransferase superfamily. PrmA family.

It localises to the cytoplasm. It carries out the reaction L-lysyl-[protein] + 3 S-adenosyl-L-methionine = N(6),N(6),N(6)-trimethyl-L-lysyl-[protein] + 3 S-adenosyl-L-homocysteine + 3 H(+). Functionally, methylates ribosomal protein L11. In Nitrosomonas europaea (strain ATCC 19718 / CIP 103999 / KCTC 2705 / NBRC 14298), this protein is Ribosomal protein L11 methyltransferase.